A 249-amino-acid chain; its full sequence is Pulmonary surfactant-associated protein A (249 aa).

Positions 1 to 20 (MLRWPLALTFLLLAVSGLEC) are cleaved as a signal peptide. A Collagen-like domain is found at 28–100 (ASPGIPGTPG…PGERGPPGLP (73 aa)). Positions 29 to 102 (SPGIPGTPGS…ERGPPGLPAH (74 aa)) are disordered. A 4-hydroxyproline mark is found at Pro30, Pro33, Pro36, Pro42, Pro54, Pro57, Pro63, and Pro70. Residues 42 to 51 (PGRDGRDGIK) are compositionally biased toward basic and acidic residues. The segment covering 84 to 93 (ERGEKGEPGE) has biased composition (basic and acidic residues). The C-type lectin domain occupies 133-249 (AVGEKVFSTN…QQYRLAICEF (117 aa)). 2 disulfide bridges follow: Cys155–Cys247 and Cys225–Cys239. A glycan (N-linked (GlcNAc...) asparagine) is linked at Asn208. Residues Glu216, Arg218, Asn235, and Asp236 each coordinate Ca(2+).

The protein belongs to the SFTPA family. In terms of assembly, oligomeric complex of 6 set of homotrimers.

It localises to the secreted. The protein resides in the extracellular space. Its subcellular location is the extracellular matrix. It is found in the surface film. In presence of calcium ions, it binds to surfactant phospholipids and contributes to lower the surface tension at the air-liquid interface in the alveoli of the mammalian lung and is essential for normal respiration. Enhances the expression of MYO18A/SP-R210 on alveolar macrophages. The sequence is that of Pulmonary surfactant-associated protein A (SFTPA1) from Sus scrofa (Pig).